The following is a 610-amino-acid chain: E3 ubiquitin-protein ligase hrd-1 (610 aa).

Residues 1–23 (MRVSAGLMIGGSCVATAATILNA) form the signal peptide. Residues 24 to 41 (FLINKQFYPSIVYLSKSN) are Lumenal-facing. A helical membrane pass occupies residues 42–62 (ASMAVIYVQGIVLVYLMFQLL). The Cytoplasmic portion of the chain corresponds to 63 to 99 (KSILFGDLRAAEAEHLSERTWHAVLETCLAFTVFRDD). The helical transmembrane segment at 100–120 (FSAIFVMQFIGLLFIKCFHWL) threads the bilayer. The Lumenal portion of the chain corresponds to 121–144 (ADDRVDMMERSPVITLRFHLRMMT). The chain crosses the membrane as a helical span at residues 145-165 (VLAALGFADSYFVSSAYFTTI). The Cytoplasmic portion of the chain corresponds to 166–170 (TRGAS). Residues 171 to 191 (AQIVFGFEYAILLALVLHVTI) traverse the membrane as a helical segment. At 192–215 (KYLLHMHDLRNPQSWDNKAVYLLY) the chain is on the lumenal side. A helical membrane pass occupies residues 216–236 (AELFINLIRCLLYGFFAVVML). Residues 237 to 610 (RVHTFPLFSV…ARLLGENANQ (374 aa)) are Cytoplasmic-facing. The RING-type; atypical zinc-finger motif lies at 292–333 (CIICREEMTVDASPKRLPCSHVFHAHCLRSWFQRQQTCPTCR). 3 disordered regions span residues 386 to 408 (QPAG…GPFP), 452 to 480 (VNTT…LRRM), and 521 to 610 (RPVV…NANQ). Residues 452–474 (VNTTQGTSSETPPVNPSYSQLST) show a composition bias toward polar residues. Residues 560–589 (TESPSTSSTAPSTSSPVTASSTPTTSSTRT) show a composition bias toward low complexity.

It belongs to the HRD1 family. In terms of assembly, homodimer.

It is found in the endoplasmic reticulum membrane. It catalyses the reaction S-ubiquitinyl-[E2 ubiquitin-conjugating enzyme]-L-cysteine + [acceptor protein]-L-lysine = [E2 ubiquitin-conjugating enzyme]-L-cysteine + N(6)-ubiquitinyl-[acceptor protein]-L-lysine.. It participates in protein modification; protein ubiquitination. Functionally, acts as an E3 ubiquitin-protein ligase which accepts ubiquitin specifically from endoplasmic reticulum-associated ubc-7 E2 ligase and transfers it to substrates, promoting their degradation. Component of the endoplasmic reticulum quality control (ERQC) system, which is also called the ER-associated degradation (ERAD) system, involved in ubiquitin-dependent degradation of misfolded endoplasmic reticulum proteins. Also promotes the degradation of normal but naturally short-lived proteins. Protects cells from ER stress-induced apoptosis. Thought to play a role together with hsp-3 in developmental growth and function of intestinal cells and to play a role together with hsp-4 in gonad formation. Plays a key role in the degradation of the potassium channel slo-1, perhaps acting directly, in targeting slo-1 to the ER-associated degradation pathway (ERAD), and also indirectly, via activation of the transcription factor skn-1, which mediates proteasomal homeostasis. The polypeptide is E3 ubiquitin-protein ligase hrd-1 (sel-11) (Caenorhabditis elegans).